The primary structure comprises 256 residues: Follistatin-related protein 3 (256 aa).

A signal peptide spans 1–23; it reads MRPGALWPLLWGALVWAVGSVGA. A TB domain is found at 34–105; the sequence is GVCWLQQGKE…SCDGVECGPG (72 aa). Intrachain disulfides connect Cys-36–Cys-59, Cys-46–Cys-90, Cys-60–Cys-93, Cys-97–Cys-108, Cys-102–Cys-117, Cys-119–Cys-151, Cys-123–Cys-144, and Cys-133–Cys-165. Asn-71 carries an N-linked (GlcNAc...) asparagine glycan. In terms of domain architecture, Follistatin-like 1 spans 97–117; it reads CDGVECGPGKACRMLGGRPHC. Kazal-like domains lie at 111-167 and 187-243; these read LGGR…RCQK and SAHC…ICTG. Residues 168–191 form the Follistatin-like 2 domain; sequence SCAQVVCPRPQSCLVDQTGSAHCV. Disulfide bonds link Cys-193/Cys-227, Cys-198/Cys-220, and Cys-209/Cys-241. An N-linked (GlcNAc...) asparagine glycan is attached at Asn-213.

In terms of assembly, interacts with INHBA and INHBB. Interacts with FN1. Interacts with ADAM12. Interacts with MLLT10; the interaction enhances MLLT10 in vitro transcriptional activity and self-association. Interacts with MSTN.

The protein resides in the secreted. It localises to the nucleus. Its function is as follows. The secreted form is a binding and antagonizing protein for members of the TGF-beta family, such as activin, BMP2 and MSTN. Inhibits activin A-, activin B-, BMP2- and MSDT-induced cellular signaling; more effective on activin A than on activin B. Involved in bone formation; inhibits osteoclast differentiation. Involved in hematopoiesis; involved in differentiation of hemopoietic progenitor cells, increases hematopoietic cell adhesion to fibronectin and seems to contribute to the adhesion of hematopoietic precursor cells to the bone marrow stroma. The nuclear form is probably involved in transcriptional regulation via interaction with MLLT10. This Rattus norvegicus (Rat) protein is Follistatin-related protein 3 (Fstl3).